Reading from the N-terminus, the 769-residue chain is Serine/threonine-protein kinase PLK4 (769 aa).

Residues 14–267 (YEVQHLLGKG…LEAVLCHPFM (254 aa)) form the Protein kinase domain. ATP-binding positions include 20–28 (LGKGGFATV) and Lys43. Residue Asp138 is the Proton acceptor of the active site. Residues 381–498 (EDRISVPPLN…ARFVGLVKSK (118 aa)) enclose the Cryptic POLO box 1 (CPB1) domain. Residues 499–602 (TPKVTYFSTL…GRRPITDVQP (104 aa)) enclose the Cryptic POLO box 2 (CPB2) domain. Residues 660–739 (PIKRINVPEI…IPNIQLKLKT (80 aa)) enclose the POLO box domain.

The protein belongs to the protein kinase superfamily. Ser/Thr protein kinase family. CDC5/Polo subfamily. In terms of assembly, homodimer. Interacts with Alms1a. Post-translationally, ubiquitinated by the SCF-slmb ubiquitin ligase complex; leading to its degradation by the proteasome during interphase and regulating centriole number and ensuring the block to centriole reduplication. In terms of tissue distribution, expressed in testis (at protein level).

It localises to the cytoplasm. The protein resides in the cytoskeleton. Its subcellular location is the microtubule organizing center. It is found in the centrosome. The protein localises to the centriole. The catalysed reaction is L-seryl-[protein] + ATP = O-phospho-L-seryl-[protein] + ADP + H(+). It carries out the reaction L-threonyl-[protein] + ATP = O-phospho-L-threonyl-[protein] + ADP + H(+). In terms of biological role, serine/threonine-protein kinase that plays a central role in centriole duplication. Able to trigger procentriole formation on the surface of the mother centriole cylinder, using mother centriole as a platform, leading to the recruitment of centriole biogenesis proteins such as Sas-6. When overexpressed, it is able to induce centrosome amplification through the simultaneous generation of multiple procentrioles adjoining each parental centriole during S phase. Centrosome amplification following overexpression can initiate tumorigenesis, highlighting the importance of centrosome regulation in cancers. This Drosophila melanogaster (Fruit fly) protein is Serine/threonine-protein kinase PLK4 (SAK).